We begin with the raw amino-acid sequence, 315 residues long: Olfactory receptor 2V1 (315 aa).

7 helical membrane passes run 31–51 (TVMLVFTVALCGNVLLILLIY), 59–79 (PMYFFLSQLSLMDLMLVCNIV), 100–120 (IQIGFFVSLVGSEGLLLGLMA), 145–165 (IAGSSWAFGILDGIIQMVAAM), 196–216 (FDTLLFACCVFMLLLPFSIIV), 239–259 (LATCSSHLTAVSLFYGAAMFI), and 273–293 (KVVSIFYTVLTPMLNPLIYSL). Cysteine 98 and cysteine 180 are oxidised to a cystine.

It belongs to the G-protein coupled receptor 1 family.

It is found in the cell membrane. Functionally, odorant receptor. Activated by (+) and (-)-limonene. The chain is Olfactory receptor 2V1 from Mus musculus (Mouse).